Here is a 181-residue protein sequence, read N- to C-terminus: Large ribosomal subunit protein uL5 (181 aa).

Belongs to the universal ribosomal protein uL5 family. As to quaternary structure, part of the 50S ribosomal subunit; part of the 5S rRNA/L5/L18/L25 subcomplex. Contacts the 5S rRNA and the P site tRNA. Forms a bridge to the 30S subunit in the 70S ribosome.

This is one of the proteins that bind and probably mediate the attachment of the 5S RNA into the large ribosomal subunit, where it forms part of the central protuberance. In the 70S ribosome it contacts protein S13 of the 30S subunit (bridge B1b), connecting the 2 subunits; this bridge is implicated in subunit movement. Contacts the P site tRNA; the 5S rRNA and some of its associated proteins might help stabilize positioning of ribosome-bound tRNAs. This Helicobacter acinonychis (strain Sheeba) protein is Large ribosomal subunit protein uL5.